Consider the following 206-residue polypeptide: N-(5'-phosphoribosyl)anthranilate isomerase (206 aa).

This sequence belongs to the TrpF family.

The catalysed reaction is N-(5-phospho-beta-D-ribosyl)anthranilate = 1-(2-carboxyphenylamino)-1-deoxy-D-ribulose 5-phosphate. Its pathway is amino-acid biosynthesis; L-tryptophan biosynthesis; L-tryptophan from chorismate: step 3/5. In Chlamydia caviae (strain ATCC VR-813 / DSM 19441 / 03DC25 / GPIC) (Chlamydophila caviae), this protein is N-(5'-phosphoribosyl)anthranilate isomerase.